Consider the following 522-residue polypeptide: Kelch domain-containing protein 4 (522 aa).

A compositionally biased stretch (basic residues) spans 1–10; it reads MGKKGKKEKK. A disordered region spans residues 1 to 33; the sequence is MGKKGKKEKKGRGAEKTAAKMEKKVSKRSRKEE. Basic and acidic residues predominate over residues 11-24; that stretch reads GRGAEKTAAKMEKK. 5 Kelch repeats span residues 77–129, 133–187, 188–241, 243–289, and 308–361; these read ELIL…VVPQ, QLWV…AWKR, QLIL…VTPQ, GIII…MNPS, and QTLF…RRGR. Disordered stretches follow at residues 346 to 378, 402 to 432, and 481 to 522; these read QLKG…GAGT, LAAP…PCPR, and DPET…GAED. Residues Ser-413 and Ser-418 each carry the phosphoserine modification. One copy of the Kelch 6 repeat lies at 443–494; sequence VLYVYGGMFEAGDRQVTLSDLHCLDLHRMEAWKALVEMDPETQEWLEETDSE.

This Pongo abelii (Sumatran orangutan) protein is Kelch domain-containing protein 4 (KLHDC4).